We begin with the raw amino-acid sequence, 610 residues long: 6(G)-fructosyltransferase (610 aa).

Over 1 to 20 the chain is Cytoplasmic; it reads MATSLQAPILGSRPPRRTLR. Residues 21-38 traverse the membrane as a helical; Signal-anchor for type II membrane protein segment; the sequence is FLSFALFSALVLVVASFS. Residues 39-610 lie on the Vacuolar side of the membrane; it reads SRKSESGSGL…NQYYPFTSSN (572 aa). Substrate is bound by residues 79–82, Gln98, Trp106, 141–142, and 207–208; these read YMND, WT, and RD. Residue Asp82 is part of the active site. N-linked (GlcNAc...) asparagine glycans are attached at residues Asn215, Asn229, and Asn248. Residue Glu266 participates in substrate binding. Residue Asn459 is glycosylated (N-linked (GlcNAc...) asparagine). Cys460 and Cys508 form a disulfide bridge. N-linked (GlcNAc...) asparagine glycosylation is found at Asn580 and Asn597.

Belongs to the glycosyl hydrolase 32 family. Might be processed in two N-terminal and C-terminal proteolytic fragments.

It localises to the vacuole membrane. The catalysed reaction is [1-beta-D-fructofuranosyl-(2-&gt;1)-]m+1 alpha-D-glucopyranoside + [1-beta-D-fructofuranosyl-(2-&gt;1)-]n+1 alpha-D-glucopyranoside = [1-beta-D-fructofuranosyl-(2-&gt;1)-]m alpha-D-glucopyranoside + [1-beta-D-fructofuranosyl-(2-&gt;1)-]n+1 beta-D-fructofuranosyl-(2-&gt;6)-alpha-D-glucopyranoside (m &gt; 0, n &gt;= 0).. In terms of biological role, involved in the synthesis of fructan of the inulin neoseries. Has no 1-FFT activity. The chain is 6(G)-fructosyltransferase (FT1) from Asparagus officinalis (Garden asparagus).